We begin with the raw amino-acid sequence, 467 residues long: Probable Xaa-Pro aminopeptidase pepP (467 aa).

Residues D264, D275, E398, and E438 each coordinate Mn(2+).

The protein belongs to the peptidase M24B family. Mn(2+) serves as cofactor.

It catalyses the reaction Release of any N-terminal amino acid, including proline, that is linked to proline, even from a dipeptide or tripeptide.. In terms of biological role, catalyzes the removal of a penultimate prolyl residue from the N-termini of peptides. The chain is Probable Xaa-Pro aminopeptidase pepP (pepP) from Neosartorya fischeri (strain ATCC 1020 / DSM 3700 / CBS 544.65 / FGSC A1164 / JCM 1740 / NRRL 181 / WB 181) (Aspergillus fischerianus).